A 265-amino-acid chain; its full sequence is Undecaprenyl-diphosphatase (265 aa).

8 helical membrane-spanning segments follow: residues 1 to 21, 39 to 59, 86 to 106, 112 to 132, 140 to 160, 186 to 206, 219 to 239, and 244 to 264; these read MDILHAVFLALIQGITEFLPI, QGLAFDVAVHVGTLSAVILYF, WCIIVATVPAGLFGLLLGNFI, SVSVIATTTVVFGLLLWFADA, LAQMTLFIALVIGLAQALAMI, FSFLLSIPIITLSGGYMGLKL, VGVLVSAISAYICIHYFLSFI, and MLPFVIYRLLLGAGLFALVWF.

It belongs to the UppP family.

It is found in the cell inner membrane. The enzyme catalyses di-trans,octa-cis-undecaprenyl diphosphate + H2O = di-trans,octa-cis-undecaprenyl phosphate + phosphate + H(+). Functionally, catalyzes the dephosphorylation of undecaprenyl diphosphate (UPP). Confers resistance to bacitracin. This chain is Undecaprenyl-diphosphatase, found in Saccharophagus degradans (strain 2-40 / ATCC 43961 / DSM 17024).